A 70-amino-acid chain; its full sequence is MSDKKSDFEKLFERSKVQETSIFDINDIDEQKPYEEHSIEELSYILEYEKIDKKTREKIKKIIKEKQQNL.

To M.pneumoniae MPN377.

This is an uncharacterized protein from Ureaplasma parvum serovar 3 (strain ATCC 700970).